The sequence spans 49 residues: Large ribosomal subunit protein bL33A (49 aa).

It belongs to the bacterial ribosomal protein bL33 family.

This chain is Large ribosomal subunit protein bL33A, found in Latilactobacillus sakei subsp. sakei (strain 23K) (Lactobacillus sakei subsp. sakei).